The chain runs to 341 residues: Glyceraldehyde-3-phosphate dehydrogenase (341 aa).

Residues T11 to I12 and G110 each bind NAD(+). S139–N141 is a D-glyceraldehyde 3-phosphate binding site. The Nucleophile role is filled by C140. R168 contacts NAD(+). Position 194–195 (H194–G195) interacts with D-glyceraldehyde 3-phosphate. Q302 is a binding site for NAD(+).

It belongs to the glyceraldehyde-3-phosphate dehydrogenase family. In terms of assembly, homotetramer.

The protein resides in the cytoplasm. It catalyses the reaction D-glyceraldehyde 3-phosphate + phosphate + NADP(+) = (2R)-3-phospho-glyceroyl phosphate + NADPH + H(+). It carries out the reaction D-glyceraldehyde 3-phosphate + phosphate + NAD(+) = (2R)-3-phospho-glyceroyl phosphate + NADH + H(+). Its pathway is carbohydrate degradation; glycolysis; pyruvate from D-glyceraldehyde 3-phosphate: step 1/5. In Methanoculleus marisnigri (strain ATCC 35101 / DSM 1498 / JR1), this protein is Glyceraldehyde-3-phosphate dehydrogenase.